The chain runs to 356 residues: 3-isopropylmalate dehydrogenase (356 aa).

4 residues coordinate substrate: R95, R105, R133, and D223. 3 residues coordinate Mg(2+): D223, D247, and D251. NAD(+) is bound at residue 281 to 293; it reads GSAPDIAGQNKAN.

It belongs to the isocitrate and isopropylmalate dehydrogenases family. LeuB type 1 subfamily. As to quaternary structure, homodimer. It depends on Mg(2+) as a cofactor. Requires Mn(2+) as cofactor.

It is found in the cytoplasm. It carries out the reaction (2R,3S)-3-isopropylmalate + NAD(+) = 4-methyl-2-oxopentanoate + CO2 + NADH. The protein operates within amino-acid biosynthesis; L-leucine biosynthesis; L-leucine from 3-methyl-2-oxobutanoate: step 3/4. In terms of biological role, catalyzes the oxidation of 3-carboxy-2-hydroxy-4-methylpentanoate (3-isopropylmalate) to 3-carboxy-4-methyl-2-oxopentanoate. The product decarboxylates to 4-methyl-2 oxopentanoate. This Neisseria gonorrhoeae (strain ATCC 700825 / FA 1090) protein is 3-isopropylmalate dehydrogenase.